Consider the following 1638-residue polypeptide: Ciliary rootlet coiled-coil protein 2 (1638 aa).

Over residues methionine 1–glycine 20 the composition is skewed to polar residues. Disordered regions lie at residues methionine 1–leucine 21, arginine 39–serine 92, alanine 396–histidine 423, and threonine 1168–glutamate 1213. A compositionally biased stretch (low complexity) spans serine 67–proline 82. Residues threonine 85–glutamate 144 adopt a coiled-coil conformation. Residues serine 406–serine 421 show a composition bias toward polar residues. Coiled-coil stretches lie at residues leucine 426 to glutamate 1234 and leucine 1281 to alanine 1315. The span at arginine 1180–valine 1193 shows a compositional bias: basic and acidic residues. Disordered stretches follow at residues arginine 1338–aspartate 1383 and alanine 1506–serine 1551. Over residues serine 1349–tyrosine 1371 the composition is skewed to polar residues. Coiled coils occupy residues arginine 1412–alanine 1506 and arginine 1542–glutamate 1576.

This sequence belongs to the rootletin family.

In Mus musculus (Mouse), this protein is Ciliary rootlet coiled-coil protein 2.